The chain runs to 453 residues: Alpha-galacturonidase (453 aa).

Position 11–72 (11–72) interacts with NAD(+); it reads IKIAYIGGGS…SQWEYKSVDS (62 aa). Residue asparagine 151 participates in substrate binding. Cysteine 173 contributes to the Mn(2+) binding site. Residue histidine 174 is the Proton donor of the active site. Histidine 209 provides a ligand contact to Mn(2+).

This sequence belongs to the glycosyl hydrolase 4 family. Homotetramer. NAD(+) is required as a cofactor. Requires Mn(2+) as cofactor.

The catalysed reaction is [(1-&gt;4)-alpha-D-galacturonosyl](n) + H2O = alpha-D-galacturonate + [(1-&gt;4)-alpha-D-galacturonosyl](n-1). Alpha-galacturonidase able to catalyze the hydrolysis of the chromogenic substrate p-nitrophenyl-alpha-D-galacturonic acid (pNPalphaGalUA). It is probable that alpha-1,4-di-galacturonate (GalUA(2)) is the naturally occurring substrate. This Thermoanaerobacter italicus (strain DSM 9252 / Ab9) protein is Alpha-galacturonidase.